The following is a 343-amino-acid chain: Apolipoprotein L6 (343 aa).

Residues 1–10 (MDNQAERESE) show a composition bias toward basic and acidic residues. The tract at residues 1 to 24 (MDNQAERESEAGVGLQRDEDDAPL) is disordered.

Belongs to the apolipoprotein L family. In terms of tissue distribution, widely expressed; highly expressed in the uterus, fetal brain and spinal cord, also detected in heart, liver, lung, colon, spleen, thymus, prostate, placenta, adrenal gland, salivary and mammary gland.

The protein localises to the cytoplasm. May affect the movement of lipids in the cytoplasm or allow the binding of lipids to organelles. This chain is Apolipoprotein L6 (APOL6), found in Homo sapiens (Human).